The sequence spans 254 residues: Photosystem II 22 kDa protein 2, chloroplastic (254 aa).

Residues 1-38 (MALQQSMAMPMMVVSGLGTAPRSSPMVQLQRMKKHLVV) constitute a chloroplast transit peptide. Repeat copies occupy residues 42–148 (FKSR…FVDD) and 149–253 (ATGL…DNDD). A run of 4 helical transmembrane segments spans residues 86 to 106 (VAMLGFAASLLGEAVTGKGIL), 120 to 140 (AEPLLLFFILFTLLGAIGALG), 184 to 204 (LFVGRLAQLGIAFSLIGEIIT), and 219 to 239 (PINEIEPLLLFNILFFFFAAI).

The protein belongs to the ELIP/psbS family.

It localises to the plastid. It is found in the chloroplast thylakoid membrane. Involved in high light-mediated energy-dependent nonphotochemical quenching (NPQ, qE) and thermal dissipation (TD) thus regulating energy conversion in photosystem II and protecting from photoinhibition. Also seems to regulate quantum yield of electron transport in fluctuating light conditions. This is Photosystem II 22 kDa protein 2, chloroplastic from Oryza sativa subsp. indica (Rice).